Reading from the N-terminus, the 360-residue chain is DNA polymerase IV (360 aa).

In terms of domain architecture, UmuC spans 8–189 (IIHVDMDCFF…LPLEKIPGVG (182 aa)). 2 residues coordinate Mg(2+): D12 and D107. E108 is an active-site residue.

It belongs to the DNA polymerase type-Y family. As to quaternary structure, monomer. It depends on Mg(2+) as a cofactor.

It localises to the cytoplasm. It carries out the reaction DNA(n) + a 2'-deoxyribonucleoside 5'-triphosphate = DNA(n+1) + diphosphate. Poorly processive, error-prone DNA polymerase involved in untargeted mutagenesis. Copies undamaged DNA at stalled replication forks, which arise in vivo from mismatched or misaligned primer ends. These misaligned primers can be extended by PolIV. Exhibits no 3'-5' exonuclease (proofreading) activity. May be involved in translesional synthesis, in conjunction with the beta clamp from PolIII. The polypeptide is DNA polymerase IV (Vibrio cholerae serotype O1 (strain ATCC 39541 / Classical Ogawa 395 / O395)).